Reading from the N-terminus, the 329-residue chain is Aspartate carbamoyltransferase catalytic subunit (329 aa).

2 residues coordinate carbamoyl phosphate: arginine 66 and threonine 67. Position 94 (lysine 94) interacts with L-aspartate. Residues arginine 116, histidine 149, and glutamine 152 each contribute to the carbamoyl phosphate site. Residues arginine 189 and arginine 243 each coordinate L-aspartate. Carbamoyl phosphate contacts are provided by glycine 284 and proline 285.

It belongs to the aspartate/ornithine carbamoyltransferase superfamily. ATCase family. In terms of assembly, heterododecamer (2C3:3R2) of six catalytic PyrB chains organized as two trimers (C3), and six regulatory PyrI chains organized as three dimers (R2).

It carries out the reaction carbamoyl phosphate + L-aspartate = N-carbamoyl-L-aspartate + phosphate + H(+). It functions in the pathway pyrimidine metabolism; UMP biosynthesis via de novo pathway; (S)-dihydroorotate from bicarbonate: step 2/3. In terms of biological role, catalyzes the condensation of carbamoyl phosphate and aspartate to form carbamoyl aspartate and inorganic phosphate, the committed step in the de novo pyrimidine nucleotide biosynthesis pathway. The chain is Aspartate carbamoyltransferase catalytic subunit from Gloeobacter violaceus (strain ATCC 29082 / PCC 7421).